We begin with the raw amino-acid sequence, 301 residues long: Methionine aminopeptidase (301 aa).

A substrate-binding site is contributed by histidine 65. Residues aspartate 85, aspartate 96, and histidine 156 each coordinate a divalent metal cation. Position 164 (histidine 164) interacts with substrate. 2 residues coordinate a divalent metal cation: glutamate 189 and glutamate 284.

It belongs to the peptidase M24A family. Methionine aminopeptidase archaeal type 2 subfamily. Monomer. Co(2+) serves as cofactor. Requires Zn(2+) as cofactor. The cofactor is Mn(2+). Fe(2+) is required as a cofactor.

It catalyses the reaction Release of N-terminal amino acids, preferentially methionine, from peptides and arylamides.. Removes the N-terminal methionine from nascent proteins. The N-terminal methionine is often cleaved when the second residue in the primary sequence is small and uncharged (Met-Ala-, Cys, Gly, Pro, Ser, Thr, or Val). The chain is Methionine aminopeptidase from Saccharolobus solfataricus (strain ATCC 35092 / DSM 1617 / JCM 11322 / P2) (Sulfolobus solfataricus).